Consider the following 537-residue polypeptide: MGEIWSELKAHHSAKSRRKMLDLFEKGNRVQAFSATVDGLYFDFSKTNLDDGALSLLLELARVKGVESRRAAMFAGDKINETEGRAVLHTALRAPAGPIKVDGQDIMPGVLETRARCFTFAQQVRDGSFTAQGGRITDVVNIGIGGSDLGPAMATLALAPYHDGPRLHYVSNVDGADMNGALQGIDPKTTLVIVASKTFTTIETMTNAQTARDWMAQDVADPSAQFVALSSSTEKAGAFGIPPERTFGFEDWVGGRYSLWGPIGLGLMIAIGPEAFQQFLDGAATMDRHFQEADLADNLPVLLALVGMWHNQVEGHATRAVLPYDNRLSRLPAYLQQLEMESNGKSVAMDGSALQQNSGPVVWGEPGTNGQHAFYQLIHQGTRVVPCEFLVAAKGHEPDLTHHHRLLVANCLAQSEALMRGRSMEEARALMAAKGLEGAELERQAAHRVFPGNRPSTTLLYDQLTPFTLGQIIALYEHRVFVEGVILGINSFDQWGVELGKELATALEPVLTGKDDGAGKDGSTLALVDAVKAVGGI.

Residue glutamate 341 is the Proton donor of the active site. Active-site residues include histidine 372 and lysine 501.

Belongs to the GPI family.

The protein localises to the cytoplasm. It carries out the reaction alpha-D-glucose 6-phosphate = beta-D-fructose 6-phosphate. It participates in carbohydrate biosynthesis; gluconeogenesis. It functions in the pathway carbohydrate degradation; glycolysis; D-glyceraldehyde 3-phosphate and glycerone phosphate from D-glucose: step 2/4. Functionally, catalyzes the reversible isomerization of glucose-6-phosphate to fructose-6-phosphate. This Jannaschia sp. (strain CCS1) protein is Glucose-6-phosphate isomerase.